Here is a 305-residue protein sequence, read N- to C-terminus: tRNA dimethylallyltransferase (305 aa).

9 to 16 lines the ATP pocket; it reads GPTASGKT. 11-16 is a substrate binding site; it reads TASGKT. 3 interaction with substrate tRNA regions span residues 34–37, 158–162, and 239–244; these read DSAL, QRLSR, and RCVGYR.

It belongs to the IPP transferase family. Monomer. Mg(2+) serves as cofactor.

The enzyme catalyses adenosine(37) in tRNA + dimethylallyl diphosphate = N(6)-dimethylallyladenosine(37) in tRNA + diphosphate. Its function is as follows. Catalyzes the transfer of a dimethylallyl group onto the adenine at position 37 in tRNAs that read codons beginning with uridine, leading to the formation of N6-(dimethylallyl)adenosine (i(6)A). The sequence is that of tRNA dimethylallyltransferase from Aeromonas hydrophila subsp. hydrophila (strain ATCC 7966 / DSM 30187 / BCRC 13018 / CCUG 14551 / JCM 1027 / KCTC 2358 / NCIMB 9240 / NCTC 8049).